The following is a 310-amino-acid chain: tRNA dimethylallyltransferase (310 aa).

13–20 (GPTASGKT) serves as a coordination point for ATP. 15–20 (TASGKT) is a substrate binding site. Interaction with substrate tRNA stretches follow at residues 38–41 (DSAL), 162–166 (QRLSR), 243–248 (RCVGYR), and 276–283 (KRQITWLR).

Belongs to the IPP transferase family. As to quaternary structure, monomer. Requires Mg(2+) as cofactor.

The catalysed reaction is adenosine(37) in tRNA + dimethylallyl diphosphate = N(6)-dimethylallyladenosine(37) in tRNA + diphosphate. Its function is as follows. Catalyzes the transfer of a dimethylallyl group onto the adenine at position 37 in tRNAs that read codons beginning with uridine, leading to the formation of N6-(dimethylallyl)adenosine (i(6)A). The chain is tRNA dimethylallyltransferase from Vibrio campbellii (strain ATCC BAA-1116).